The following is a 231-amino-acid chain: Small ribosomal subunit protein uS3 (231 aa).

The region spanning 17–86 is the KH type-2 domain; sequence VEQYLNKELK…SPQVEVQQVA (70 aa).

The protein belongs to the universal ribosomal protein uS3 family. As to quaternary structure, part of the 30S ribosomal subunit.

In terms of biological role, binds the lower part of the 30S subunit head. This chain is Small ribosomal subunit protein uS3, found in Methanocorpusculum labreanum (strain ATCC 43576 / DSM 4855 / Z).